Here is a 443-residue protein sequence, read N- to C-terminus: Xaa-Pro dipeptidase (443 aa).

Mn(2+)-binding residues include Asp-246, Asp-257, His-339, Glu-384, and Glu-423.

The protein belongs to the peptidase M24B family. Bacterial-type prolidase subfamily. It depends on Mn(2+) as a cofactor.

The enzyme catalyses Xaa-L-Pro dipeptide + H2O = an L-alpha-amino acid + L-proline. Splits dipeptides with a prolyl residue in the C-terminal position. The protein is Xaa-Pro dipeptidase of Escherichia coli O7:K1 (strain IAI39 / ExPEC).